We begin with the raw amino-acid sequence, 84 residues long: Large ribosomal subunit protein bL27 (84 aa).

Positions 1 to 22 (MAHKKGASSTRNGRDSNAQRLG) are disordered. Residues 7-19 (ASSTRNGRDSNAQ) show a composition bias toward polar residues.

The protein belongs to the bacterial ribosomal protein bL27 family.

The sequence is that of Large ribosomal subunit protein bL27 from Streptomyces coelicolor (strain ATCC BAA-471 / A3(2) / M145).